Consider the following 229-residue polypeptide: Aspartate-rich protein 1 (229 aa).

Residues 84–106 (SEEDNDDAKILPSPVQGSSEDNL) are disordered.

The protein is Aspartate-rich protein 1 (DRICH1) of Homo sapiens (Human).